Reading from the N-terminus, the 417-residue chain is Laccase-like protein claX (417 aa).

It belongs to the multicopper oxidase family.

In terms of biological role, laccase-like protein; part of the gene cluster that mediates the biosynthesis of clavilactone A, a meroterpenoid that features a unique benzo-fused ten-membered carbocyclic ring unit with an alpha,beta-epoxy-gamma-lactone moiety, forming an intriguing 10/5/3 tricyclic nested skeleton. ClaR, ClaS and ClaT are sufficient to produce clavilactone A and the function of claX, if any, has still to be identified. The biosynthesis begins with the prenyltransferase claS that transfers geranyl pyrophosphate (GPP) to hydroquinone to produces geranylhydroquinon. The cytochrome P450 monooxygenase claR then catalyzes the diradical coupling reaction between the intramolecular hydroquinone and allyl moieties to form the benzo-fused ten-membered carbocyclic ring unit of wigantol. Finally the cytochrome P450 monooxygenase claT exquisitely and stereoselectively assembles the alpha,beta-epoxy-gamma-lactone moiety, producing clavilactone A via arnebinol A. The protein is Laccase-like protein claX of Ampulloclitocybe clavipes (Club foot).